The primary structure comprises 446 residues: MSIDTIVAIATPPGRGGVGIVRISGPKAYAIALCLNGNKALQPRLATFCSLYKGNNEVLDQGLVLYFKGPHSFTGEDIIEIQAHGSPVVLDLLIKESIAAGARLARPGEFSERAFLNDKIDLIQAEAIADLIQASSDTAARMALKSLQGDFSKKINQLNEELIYLRMYVEAAIDFPEEEIDFLNDGNVSQLLQRIIGRLEEIRSQANQGVLLREGLSLVIAGRPNAGKSTLINNLAGRDVAIVTEIAGTTRDIMREHILLDDIPLHIIDTAGLRDSDDLVEKEGIKRAWQELKRADCVLLVVDINNRDQQNSLLNELRLTLPNKIPIITVYNKIDTTKLTAKCDEHTVYLSAKTGEGLDELKKVIKQVVGYQPTEGQFLARRRHLQALDEAKALLLTGQSQLTNHKAGELLAEDLRLAHQTLCEITGEFTSDDLLGKIFSSFCIGK.

The (6S)-5-formyl-5,6,7,8-tetrahydrofolate site is built by Arg22, Glu80, and Lys119. The TrmE-type G domain occupies 215 to 370 (GLSLVIAGRP…LKKVIKQVVG (156 aa)). Asn225 serves as a coordination point for K(+). GTP contacts are provided by residues 225-230 (NAGKST), 244-250 (TEIAGTT), and 269-272 (DTAG). Ser229 provides a ligand contact to Mg(2+). K(+)-binding residues include Thr244, Ile246, and Thr249. Position 250 (Thr250) interacts with Mg(2+). Lys446 lines the (6S)-5-formyl-5,6,7,8-tetrahydrofolate pocket.

Belongs to the TRAFAC class TrmE-Era-EngA-EngB-Septin-like GTPase superfamily. TrmE GTPase family. In terms of assembly, homodimer. Heterotetramer of two MnmE and two MnmG subunits. K(+) serves as cofactor.

The protein resides in the cytoplasm. Exhibits a very high intrinsic GTPase hydrolysis rate. Involved in the addition of a carboxymethylaminomethyl (cmnm) group at the wobble position (U34) of certain tRNAs, forming tRNA-cmnm(5)s(2)U34. The protein is tRNA modification GTPase MnmE of Legionella pneumophila (strain Paris).